The sequence spans 895 residues: Microsomal triglyceride transfer protein large subunit (895 aa).

A signal peptide spans 1 to 18 (MILLAVLFLCFFSSYSAS). The Vitellogenin domain maps to 28-659 (LNNERLYKLT…VFQYLGKAGL (632 aa)). Cys-174 and Cys-194 are disulfide-bonded.

As to quaternary structure, heterodimer; heterodimerizes with the protein disulfide isomerase (P4HB/PDI). Interacts with APOB. Interacts with PRAP1.

Its subcellular location is the endoplasmic reticulum. It localises to the golgi apparatus. The enzyme catalyses a 1,2-diacyl-sn-glycero-3-phosphocholine(in) = a 1,2-diacyl-sn-glycero-3-phosphocholine(out). It carries out the reaction a 1,2-diacyl-sn-glycero-3-phosphoethanolamine(in) = a 1,2-diacyl-sn-glycero-3-phosphoethanolamine(out). It catalyses the reaction a cholesterol ester(in) = a cholesterol ester(out). The catalysed reaction is a triacyl-sn-glycerol(in) = a triacyl-sn-glycerol(out). In terms of biological role, catalyzes the transport of triglyceride, cholesteryl ester, and phospholipid between phospholipid surfaces. Required for the assembly and secretion of plasma lipoproteins that contain apolipoprotein B. May be involved in regulating cholesteryl ester biosynthesis in cells that produce lipoproteins. In Mesocricetus auratus (Golden hamster), this protein is Microsomal triglyceride transfer protein large subunit (MTTP).